Here is a 200-residue protein sequence, read N- to C-terminus: Protein GrpE (200 aa).

Belongs to the GrpE family. In terms of assembly, homodimer.

Its subcellular location is the cytoplasm. Functionally, participates actively in the response to hyperosmotic and heat shock by preventing the aggregation of stress-denatured proteins, in association with DnaK and GrpE. It is the nucleotide exchange factor for DnaK and may function as a thermosensor. Unfolded proteins bind initially to DnaJ; upon interaction with the DnaJ-bound protein, DnaK hydrolyzes its bound ATP, resulting in the formation of a stable complex. GrpE releases ADP from DnaK; ATP binding to DnaK triggers the release of the substrate protein, thus completing the reaction cycle. Several rounds of ATP-dependent interactions between DnaJ, DnaK and GrpE are required for fully efficient folding. This chain is Protein GrpE, found in Mycoplasma mycoides subsp. mycoides SC (strain CCUG 32753 / NCTC 10114 / PG1).